We begin with the raw amino-acid sequence, 284 residues long: MEMO1 family protein SSO0066 (284 aa).

The protein belongs to the MEMO1 family.

This Saccharolobus solfataricus (strain ATCC 35092 / DSM 1617 / JCM 11322 / P2) (Sulfolobus solfataricus) protein is MEMO1 family protein SSO0066.